Reading from the N-terminus, the 292-residue chain is NAC domain-containing protein 96 (292 aa).

The NAC domain maps to 6–158 (LPPGFRFHPT…AFVLCRVAMK (153 aa)). The DNA-binding element occupies 106-164 (IGYRKTLVFYKGRAPLGDRSNWIMHEYRLCDDDTSQGSQNLKGAFVLCRVAMKNEIKTN). Residues 171 to 199 (PSEQTIGSGESSGLSSRVTSPSRDETMPF) form a disordered region. Polar residues predominate over residues 172-191 (SEQTIGSGESSGLSSRVTSP).

As to quaternary structure, interacts with ABF2 and ABF4. Expressed in roots, rosettes leaves, cauline leaves and stems.

It localises to the nucleus. Its function is as follows. Transcriptional activator involved in the positive regulation of abscisic acid (ABA) responsive genes. Acts as a positive factor of ABA-mediated responses. Involved in the transcriptional activation of ABA-inducible genes in response to dehydration and osmotic stresses. Plays a positive role in both stomatal closure and water loss under dehydration stress conditions. Acts synergistically with ABF2 to activate the dehydration stress-response factor RD29A transcription. Binds to the consensus core cis-acting elements 5'-CGTA-3' and 5'-CACG-3' at the RD29A promoter. Involved in hypocotyl graft union formation. Required for the auxin-mediated promotion of vascular tissue proliferation during hypocotyl graft attachment. The sequence is that of NAC domain-containing protein 96 from Arabidopsis thaliana (Mouse-ear cress).